The following is a 239-amino-acid chain: Eukaryotic translation initiation factor 6 (239 aa).

The protein belongs to the eIF-6 family. In terms of assembly, monomer. Associates with the 60S ribosomal subunit.

It localises to the cytoplasm. It is found in the nucleus. The protein localises to the nucleolus. In terms of biological role, binds to the 60S ribosomal subunit and prevents its association with the 40S ribosomal subunit to form the 80S initiation complex in the cytoplasm. May also be involved in ribosome biogenesis. The sequence is that of Eukaryotic translation initiation factor 6 from Entamoeba dispar (strain ATCC PRA-260 / SAW760).